A 592-amino-acid chain; its full sequence is uncharacterized protein (592 aa).

6 helical membrane passes run 12-32 (IWIL…IFLL), 58-78 (PILF…ISLV), 102-122 (MGLF…SYYL), 191-211 (ISYT…GVEI), 214-234 (MMVF…FWLG), and 299-319 (FSGF…LIQV). In terms of domain architecture, ABC transmembrane type-1 spans 58–358 (PILFFLLIVA…FRSTYDNFAS (301 aa)). The region spanning 391-592 (VIFKNLSIQN…LQDKGQWQVL (202 aa)) is the ABC transporter domain. Residue 424 to 431 (GKSGAGKT) coordinates ATP.

It belongs to the ABC transporter superfamily.

Its subcellular location is the cell inner membrane. This is an uncharacterized protein from Haemophilus influenzae (strain ATCC 51907 / DSM 11121 / KW20 / Rd).